Consider the following 179-residue polypeptide: ATP synthase subunit delta (179 aa).

This sequence belongs to the ATPase delta chain family. In terms of assembly, F-type ATPases have 2 components, F(1) - the catalytic core - and F(0) - the membrane proton channel. F(1) has five subunits: alpha(3), beta(3), gamma(1), delta(1), epsilon(1). F(0) has three main subunits: a(1), b(2) and c(10-14). The alpha and beta chains form an alternating ring which encloses part of the gamma chain. F(1) is attached to F(0) by a central stalk formed by the gamma and epsilon chains, while a peripheral stalk is formed by the delta and b chains.

Its subcellular location is the cell inner membrane. In terms of biological role, f(1)F(0) ATP synthase produces ATP from ADP in the presence of a proton or sodium gradient. F-type ATPases consist of two structural domains, F(1) containing the extramembraneous catalytic core and F(0) containing the membrane proton channel, linked together by a central stalk and a peripheral stalk. During catalysis, ATP synthesis in the catalytic domain of F(1) is coupled via a rotary mechanism of the central stalk subunits to proton translocation. This protein is part of the stalk that links CF(0) to CF(1). It either transmits conformational changes from CF(0) to CF(1) or is implicated in proton conduction. In Burkholderia orbicola (strain MC0-3), this protein is ATP synthase subunit delta.